The following is a 351-amino-acid chain: MRFSDFDLRLAAFGAQPVHRGRIARVWLNGQALDTGTRRRHSEHFLPLALREALPALTAELDGLARVHSEHAGSDGSRLLVALADGQMVESVLLPRDGLCVSTQVGCAVGCRFCMTGKSGLIRQVTSMEILAQVVLARRRRAVKKVVFMGMGEPAHNLENVLEAINLLGTEGNIGHKNLVFSTVGDRRVFEALPQQRVKPALALSLHTTKAELRARLLPRAPSIAPDELVELGERYARHIGYPIQYQWTLLKGVNDGNDELDAVLRLLKGKYGVLNVIPFNSLEGDDYQRPDLERIREIVRYVHSRGVLVKVRNSAGQDVDGGCGQLRARATGADQVVTLRRAPRPQAVQA.

Catalysis depends on glutamate 90, which acts as the Proton acceptor. The Radical SAM core domain occupies 93–319 (LLPRDGLCVS…VKVRNSAGQD (227 aa)). A disulfide bridge connects residues cysteine 100 and cysteine 324. Cysteine 107, cysteine 111, and cysteine 114 together coordinate [4Fe-4S] cluster. Residues 152-153 (GE), serine 182, 205-207 (SLH), and asparagine 281 each bind S-adenosyl-L-methionine. Cysteine 324 acts as the S-methylcysteine intermediate in catalysis.

Belongs to the radical SAM superfamily. RlmN family. It depends on [4Fe-4S] cluster as a cofactor.

It is found in the cytoplasm. In Bordetella avium (strain 197N), this protein is Probable RNA methyltransferase BAV1540.